We begin with the raw amino-acid sequence, 113 residues long: Large ribosomal subunit protein bL20c (113 aa).

This sequence belongs to the bacterial ribosomal protein bL20 family.

The protein resides in the plastid. It localises to the chloroplast. Its function is as follows. Binds directly to 23S ribosomal RNA and is necessary for the in vitro assembly process of the 50S ribosomal subunit. It is not involved in the protein synthesizing functions of that subunit. In Staurastrum punctulatum (Green alga), this protein is Large ribosomal subunit protein bL20c.